Reading from the N-terminus, the 334-residue chain is Probable GTP 3',8-cyclase (334 aa).

The region spanning 24-256 (PYGRKVTGLR…RKKYMIDGVE (233 aa)) is the Radical SAM core domain. Arginine 33 lines the GTP pocket. Cysteine 40 and cysteine 44 together coordinate [4Fe-4S] cluster. Tyrosine 46 serves as a coordination point for S-adenosyl-L-methionine. Cysteine 47 lines the [4Fe-4S] cluster pocket. Lysine 85 contributes to the GTP binding site. Position 89 (glycine 89) interacts with S-adenosyl-L-methionine. GTP is bound at residue threonine 113. Serine 137 contributes to the S-adenosyl-L-methionine binding site. Lysine 176 is a binding site for GTP. [4Fe-4S] cluster contacts are provided by cysteine 269 and cysteine 272. GTP is bound at residue 274–276 (RLR). A [4Fe-4S] cluster-binding site is contributed by cysteine 286.

It belongs to the radical SAM superfamily. MoaA family. [4Fe-4S] cluster serves as cofactor.

It catalyses the reaction GTP + AH2 + S-adenosyl-L-methionine = (8S)-3',8-cyclo-7,8-dihydroguanosine 5'-triphosphate + 5'-deoxyadenosine + L-methionine + A + H(+). It functions in the pathway cofactor biosynthesis; molybdopterin biosynthesis. Catalyzes the cyclization of GTP to (8S)-3',8-cyclo-7,8-dihydroguanosine 5'-triphosphate. The sequence is that of Probable GTP 3',8-cyclase from Methanosarcina mazei (strain ATCC BAA-159 / DSM 3647 / Goe1 / Go1 / JCM 11833 / OCM 88) (Methanosarcina frisia).